The chain runs to 508 residues: 6-phosphogluconate dehydrogenase, decarboxylating 2, chloroplastic (508 aa).

The N-terminal 12 residues, 1–12 (MASPAPAPPAAS), are a transit peptide targeting the chloroplast. Residues 28 to 33 (GLATMG), 51 to 53 (NRT), 95 to 97 (VQA), and asparagine 123 each bind NADP(+). Residues asparagine 123 and 149 to 151 (SGG) contribute to the substrate site. The Proton acceptor role is filled by lysine 203. 206-207 (HN) contacts substrate. The Proton donor role is filled by glutamate 210. Tyrosine 211, lysine 284, arginine 311, arginine 475, and histidine 481 together coordinate substrate.

Belongs to the 6-phosphogluconate dehydrogenase family. In terms of assembly, homodimer.

Its subcellular location is the plastid. It is found in the chloroplast. The catalysed reaction is 6-phospho-D-gluconate + NADP(+) = D-ribulose 5-phosphate + CO2 + NADPH. Its pathway is carbohydrate degradation; pentose phosphate pathway; D-ribulose 5-phosphate from D-glucose 6-phosphate (oxidative stage): step 3/3. In terms of biological role, catalyzes the oxidative decarboxylation of 6-phosphogluconate to ribulose 5-phosphate and CO(2), with concomitant reduction of NADP to NADPH. The chain is 6-phosphogluconate dehydrogenase, decarboxylating 2, chloroplastic (G6PGH2) from Oryza sativa subsp. japonica (Rice).